The chain runs to 214 residues: Uridine kinase (214 aa).

11–18 contacts ATP; it reads GGSGSGKT.

It belongs to the uridine kinase family.

It is found in the cytoplasm. The enzyme catalyses uridine + ATP = UMP + ADP + H(+). The catalysed reaction is cytidine + ATP = CMP + ADP + H(+). It participates in pyrimidine metabolism; CTP biosynthesis via salvage pathway; CTP from cytidine: step 1/3. Its pathway is pyrimidine metabolism; UMP biosynthesis via salvage pathway; UMP from uridine: step 1/1. The sequence is that of Uridine kinase from Brevibacillus brevis (strain 47 / JCM 6285 / NBRC 100599).